A 492-amino-acid polypeptide reads, in one-letter code: Catalase isozyme C (492 aa).

R62 serves as a coordination point for heme. Residue H65 is part of the active site. R102 is a binding site for heme. N138 is a catalytic residue. F151 contributes to the heme binding site. Position 210 is a phosphotyrosine; by STRK1 (Y210). Residues 325–348 constitute a cross-link (3-(S-cysteinyl)-tyrosine (Cys-Tyr)); the sequence is CPGIIVPGIYYSDDKLLQTRIFSY. Heme contacts are provided by R344, Y348, and R355. A Peroxisome targeting signal motif is present at residues 484–492; sequence SRLSAKPSM.

The protein belongs to the catalase family. Homotetramer. Interacts with GLO1 and GLO4; these interactions are disturbed by alpha-hydroxy-2-pyridinemethanesulfonic acid (HPMS) and salicylic acid (SA). Interacts with STRK1 at the plasma membrane. The cofactor is heme. Post-translationally, activated by STRK1-mediated phosphorylation at Tyr-210 upon salt and oxidative stress. Highly expressed in mature leaves. Mainly expressed in leaf blades, stems, panicles, leaf sheaths, and culms, but barely in roots.

The protein resides in the peroxisome. The protein localises to the glyoxysome. Its subcellular location is the cell membrane. The catalysed reaction is 2 H2O2 = O2 + 2 H2O. Its activity is regulated as follows. Strongly inhibited by beta-mercaptoethanol, sodium azide and potassium cyanide. Slightly repressed by 3-amino-1,2,4-triazole (3-AT). Activity is repressed proportionally to increased concentration of NaCl, KCl, LiCl and MgCl(2). Occurs in almost all aerobically respiring organisms and serves to protect cells from the toxic effects of hydrogen peroxide. Responsible for the redox homeostasis in leaves. Prevents nitric oxide (NO) accumulation and subsequent NO-mediated leaf cell death as well as the S-nitrosylation of specific proteins (e.g. glyceraldehyde 3-phosphate dehydrogenase and thioredoxin) by degrading H(2)O(2). Involved in photorespiration. Promotes drought stress tolerance and recovery. Involved in NO-mediated enhanced tolerance to zinc oxide nanoparticles (ZnO NPs)-induced phytotoxicity. Participates in melatonin-mediated detoxification. This Oryza sativa subsp. japonica (Rice) protein is Catalase isozyme C.